Here is a 176-residue protein sequence, read N- to C-terminus: Probable chemoreceptor glutamine deamidase CheD (176 aa).

The protein belongs to the CheD family.

It catalyses the reaction L-glutaminyl-[protein] + H2O = L-glutamyl-[protein] + NH4(+). Probably deamidates glutamine residues to glutamate on methyl-accepting chemotaxis receptors (MCPs), playing an important role in chemotaxis. The protein is Probable chemoreceptor glutamine deamidase CheD of Rhodospirillum rubrum (strain ATCC 11170 / ATH 1.1.1 / DSM 467 / LMG 4362 / NCIMB 8255 / S1).